Reading from the N-terminus, the 293-residue chain is Elongation factor Ts (293 aa).

An involved in Mg(2+) ion dislocation from EF-Tu region spans residues 80-83; it reads TDFV.

The protein belongs to the EF-Ts family.

It is found in the cytoplasm. Its function is as follows. Associates with the EF-Tu.GDP complex and induces the exchange of GDP to GTP. It remains bound to the aminoacyl-tRNA.EF-Tu.GTP complex up to the GTP hydrolysis stage on the ribosome. The polypeptide is Elongation factor Ts (Burkholderia thailandensis (strain ATCC 700388 / DSM 13276 / CCUG 48851 / CIP 106301 / E264)).